The primary structure comprises 81 residues: Trefoil factor 3 (81 aa).

The first 22 residues, 1–22 (METRAFWTTLLLVLVAGSSCKA), serve as a signal peptide directing secretion. The P-type domain maps to 31–74 (SQCMVPANVRVDCGYPTVTSEQCNNRGCCFDSSIPNVPWCFKPL). 3 disulfides stabilise this stretch: cysteine 33/cysteine 59, cysteine 43/cysteine 58, and cysteine 53/cysteine 70.

In terms of assembly, monomer. Homodimer; disulfide-linked. In terms of tissue distribution, expressed in goblet cells of the intestines, and colon, in paraventricular hypothalamus and supraoptic nuclei. Weakly expressed in gastric epithelial cells (at protein level). Expressed by goblet cells of small and large intestinal epithelia, kidney and stomach. Expressed in the paraventricular hypothalamus, arcuate nucleus and amygdala of the brain. Weakly expressed in gastric epithelial cells.

The protein localises to the secreted. Its subcellular location is the extracellular space. The protein resides in the extracellular matrix. It is found in the cytoplasm. Involved in the maintenance and repair of the intestinal mucosa. Promotes the mobility of epithelial cells in healing processes (motogen). In Rattus norvegicus (Rat), this protein is Trefoil factor 3 (Tff3).